A 172-amino-acid polypeptide reads, in one-letter code: Putative phosphoesterase BcerKBAB4_1135 (172 aa).

The Proton donor role is filled by H34. 2 consecutive short sequence motifs (HXTX) follow at residues 34 to 37 (HITL) and 115 to 118 (HLTI). The Proton acceptor role is filled by H115.

Belongs to the 2H phosphoesterase superfamily. YjcG family.

This is Putative phosphoesterase BcerKBAB4_1135 from Bacillus mycoides (strain KBAB4) (Bacillus weihenstephanensis).